The chain runs to 668 residues: tRNA 5-methylaminomethyl-2-thiouridine biosynthesis bifunctional protein MnmC (668 aa).

The interval Met1–Glu245 is tRNA (mnm(5)s(2)U34)-methyltransferase. Residues Ile270–Gly668 are FAD-dependent cmnm(5)s(2)U34 oxidoreductase.

The protein in the N-terminal section; belongs to the methyltransferase superfamily. tRNA (mnm(5)s(2)U34)-methyltransferase family. In the C-terminal section; belongs to the DAO family. Requires FAD as cofactor.

Its subcellular location is the cytoplasm. It catalyses the reaction 5-aminomethyl-2-thiouridine(34) in tRNA + S-adenosyl-L-methionine = 5-methylaminomethyl-2-thiouridine(34) in tRNA + S-adenosyl-L-homocysteine + H(+). In terms of biological role, catalyzes the last two steps in the biosynthesis of 5-methylaminomethyl-2-thiouridine (mnm(5)s(2)U) at the wobble position (U34) in tRNA. Catalyzes the FAD-dependent demodification of cmnm(5)s(2)U34 to nm(5)s(2)U34, followed by the transfer of a methyl group from S-adenosyl-L-methionine to nm(5)s(2)U34, to form mnm(5)s(2)U34. In Escherichia coli (strain K12 / DH10B), this protein is tRNA 5-methylaminomethyl-2-thiouridine biosynthesis bifunctional protein MnmC.